Reading from the N-terminus, the 179-residue chain is Sperm surface protein Sp17 (179 aa).

A compositionally biased stretch (basic and acidic residues) spans 72–109; it reads HAFKDEPPEKSETQKIQPEKVAIEKETMPQETVKEKET. Disordered regions lie at residues 72–138 and 159–179; these read HAFK…EGLL and TRKE…ENNE. A compositionally biased stretch (acidic residues) spans 116-135; the sequence is EPTEEPQKEEEEEEDEEDLE. Positions 143–172 constitute an IQ domain; the sequence is MQDAAVKIQAVFRGHKTRKEYLKKRDSTDE. Residues 161–170 show a composition bias toward basic and acidic residues; sequence KEYLKKRDST.

Homodimer. May interact with ROPN1. Testis- and sperm-specific.

The protein resides in the membrane. Its function is as follows. Sperm surface zona pellucida binding protein. Helps to bind spermatozoa to the zona pellucida with high affinity. Might function in binding zona pellucida and carbohydrates. In Monodelphis domestica (Gray short-tailed opossum), this protein is Sperm surface protein Sp17 (SPA17).